A 142-amino-acid polypeptide reads, in one-letter code: Hemoglobin subunit alpha (142 aa).

Positions 2-142 constitute a Globin domain; the sequence is VLSGEDKSNI…VSTVLTSKYR (141 aa). Serine 4 is modified (phosphoserine). 2 positions are modified to N6-succinyllysine: lysine 8 and lysine 12. Lysine 17 is subject to N6-acetyllysine; alternate. The residue at position 17 (lysine 17) is an N6-succinyllysine; alternate. Tyrosine 25 carries the phosphotyrosine modification. The residue at position 36 (serine 36) is a Phosphoserine. Lysine 41 carries the post-translational modification N6-succinyllysine. Serine 50 is modified (phosphoserine). Histidine 59 provides a ligand contact to O2. Residue histidine 88 participates in heme b binding. Serine 103 bears the Phosphoserine mark. At threonine 109 the chain carries Phosphothreonine. Phosphoserine occurs at positions 112, 125, and 132. Threonine 135 and threonine 138 each carry phosphothreonine. Serine 139 is subject to Phosphoserine.

Belongs to the globin family. In terms of assembly, heterotetramer of two alpha chains and two beta chains. As to expression, red blood cells.

Its function is as follows. Involved in oxygen transport from the lung to the various peripheral tissues. Functionally, hemopressin acts as an antagonist peptide of the cannabinoid receptor CNR1. Hemopressin-binding efficiently blocks cannabinoid receptor CNR1 and subsequent signaling. The polypeptide is Hemoglobin subunit alpha (Hba) (Mus musculus (Mouse)).